A 1245-amino-acid chain; its full sequence is Trafficking protein particle complex II-specific subunit 130 homolog (1245 aa).

2 disordered regions span residues Gly-488–Pro-524 and His-884–Val-903. Composition is skewed to low complexity over residues Ala-495–Asn-507 and Thr-888–Thr-898.

Belongs to the TMEM1 family. Part of the multisubunit TRAPP (transport protein particle) II complex composed of BET3, BET5, TRS20, TRS23, TRS31, TRS33, TRS65, TRS85, TRS120 and TRS130.

The protein resides in the golgi apparatus. Its subcellular location is the trans-Golgi network. It localises to the early endosome. Functionally, specific subunit of the TRAPP II complex, a highly conserved vesicle tethering complex that is required for the proper transport of proteins in post-Golgi trafficking pathways to the growing cell plate in mitotic active cells. The chain is Trafficking protein particle complex II-specific subunit 130 homolog from Oryza sativa subsp. japonica (Rice).